The following is a 205-amino-acid chain: Molybdenum cofactor guanylyltransferase (205 aa).

GTP is bound by residues 14-16 (LAG), K27, D77, and D107. Mg(2+) is bound at residue D107.

It belongs to the MobA family. In terms of assembly, monomer. Mg(2+) serves as cofactor.

Its subcellular location is the cytoplasm. The enzyme catalyses Mo-molybdopterin + GTP + H(+) = Mo-molybdopterin guanine dinucleotide + diphosphate. Its function is as follows. Transfers a GMP moiety from GTP to Mo-molybdopterin (Mo-MPT) cofactor (Moco or molybdenum cofactor) to form Mo-molybdopterin guanine dinucleotide (Mo-MGD) cofactor. This Burkholderia vietnamiensis (strain G4 / LMG 22486) (Burkholderia cepacia (strain R1808)) protein is Molybdenum cofactor guanylyltransferase.